The following is a 1450-amino-acid chain: ABC transporter G family member 37 (1450 aa).

Residues 158-431 (GNALHILPNK…FEFMGFRCPA (274 aa)) form the ABC transporter 1 domain. 191–198 (GPPGSGKT) lines the ATP pocket. The ABC transmembrane type-2 1 domain occupies 509–721 (ELLKATIDRE…AQNAISTNEF (213 aa)). The next 6 membrane-spanning stretches (helical) occupy residues 527–547 (FMYIFKAVNLTLMALIVMTTF), 559–579 (GMIYLGALYFALDTVMFNGFA), 614–634 (IPITFLEVGVYVFITYYVIGF), 646–666 (LLLLALNQMSSALFRFIAGIG), 670–690 (VVSHTFGPLSLLAFAALGGFI), and 756–776 (IGLGALLGYTLLFNLLYTVAL). Residues 852 to 1104 (ISFNDVRYSV…KLIEYFEGID (253 aa)) form the ABC transporter 2 domain. 897-904 (GVSGAGKT) is a binding site for ATP. The ABC transmembrane type-2 2 domain maps to 1177 to 1391 (TQCLACLWKQ…TLYGLVASQF (215 aa)). A run of 7 helical transmembrane segments spans residues 1198–1218 (AVRLLFTIVIALMFGTMFWNL), 1236–1256 (YAAVLYIGVQNSGSVQPVVVV), 1284–1304 (LPYIMVQTLIYGVLVYSMIGF), 1311–1331 (FLWYLFFMYFTLLYFTFYGMM), 1341–1361 (IAAIISSAFYNVWNLFSGYLI), 1372–1392 (WYCWICPVAWTLYGLVASQFG), and 1422–1442 (VVAVVHVVFAVTFAFLFSFAI).

It belongs to the ABC transporter superfamily. ABCG family. PDR (TC 3.A.1.205) subfamily.

The protein localises to the membrane. In terms of biological role, may be a general defense protein. In Oryza sativa subsp. japonica (Rice), this protein is ABC transporter G family member 37.